We begin with the raw amino-acid sequence, 330 residues long: D-lactate dehydrogenase (330 aa).

Residues 156-157 (RI), D176, 206-207 (VP), 233-235 (AAR), and D259 contribute to the NAD(+) site. R235 is a catalytic residue. E264 is an active-site residue. Residue H296 is the Proton donor of the active site.

This sequence belongs to the D-isomer specific 2-hydroxyacid dehydrogenase family.

The catalysed reaction is (R)-lactate + NAD(+) = pyruvate + NADH + H(+). In Staphylococcus aureus (strain Mu50 / ATCC 700699), this protein is D-lactate dehydrogenase (ldhD).